Here is a 394-residue protein sequence, read N- to C-terminus: Ribulose bisphosphate carboxylase large chain (394 aa).

The residue at position 5 (Lys5) is an N6,N6,N6-trimethyllysine. Residues Asn114 and Thr164 each coordinate substrate. Residue Lys166 is the Proton acceptor of the active site. A substrate-binding site is contributed by Lys168. Mg(2+)-binding residues include Lys192, Asp194, and Glu195. Lys192 carries the post-translational modification N6-carboxylysine. His285 (proton acceptor) is an active-site residue. Positions 286, 318, and 370 each coordinate substrate.

This sequence belongs to the RuBisCO large chain family. Type I subfamily. As to quaternary structure, heterohexadecamer of 8 large chains and 8 small chains. It depends on Mg(2+) as a cofactor.

The protein localises to the plastid. It localises to the chloroplast. The enzyme catalyses 2 (2R)-3-phosphoglycerate + 2 H(+) = D-ribulose 1,5-bisphosphate + CO2 + H2O. It carries out the reaction D-ribulose 1,5-bisphosphate + O2 = 2-phosphoglycolate + (2R)-3-phosphoglycerate + 2 H(+). Its function is as follows. RuBisCO catalyzes two reactions: the carboxylation of D-ribulose 1,5-bisphosphate, the primary event in carbon dioxide fixation, as well as the oxidative fragmentation of the pentose substrate in the photorespiration process. Both reactions occur simultaneously and in competition at the same active site. This chain is Ribulose bisphosphate carboxylase large chain (rbcL), found in Euryale ferox (Gorgon plant).